A 161-amino-acid polypeptide reads, in one-letter code: Cyclin-dependent protein kinase inhibitor SMR12 (161 aa).

Residues 84–93 (EEEEVVEEEN) are compositionally biased toward acidic residues. The tract at residues 84–106 (EEEEVVEEENDGFKTPTRPENRI) is disordered.

Functionally, probable cyclin-dependent protein kinase (CDK) inhibitor that functions as a repressor of mitosis in the endoreduplication cell cycle. In Arabidopsis thaliana (Mouse-ear cress), this protein is Cyclin-dependent protein kinase inhibitor SMR12.